The following is a 323-amino-acid chain: Ubiquinone biosynthesis protein COQ4, mitochondrial (323 aa).

Histidine 205, aspartate 206, histidine 209, and glutamate 221 together coordinate Zn(2+).

Belongs to the COQ4 family. In terms of assembly, component of a multi-subunit COQ enzyme complex, composed of at least COQ3, COQ4, COQ5, COQ6, COQ7 and COQ9. It depends on Zn(2+) as a cofactor.

The protein resides in the mitochondrion inner membrane. It carries out the reaction a 4-hydroxy-3-methoxy-5-(all-trans-polyprenyl)benzoate + H(+) = a 2-methoxy-6-(all-trans-polyprenyl)phenol + CO2. It functions in the pathway cofactor biosynthesis; ubiquinone biosynthesis. Lyase that catalyzes the C1-decarboxylation of 4-hydroxy-3-methoxy-5-(all-trans-polyprenyl)benzoic acid into 2-methoxy-6-(all-trans-polyprenyl)phenol during ubiquinone biosynthesis. In Candida albicans (strain SC5314 / ATCC MYA-2876) (Yeast), this protein is Ubiquinone biosynthesis protein COQ4, mitochondrial.